Reading from the N-terminus, the 595-residue chain is MKLLNYAFVYRRFLLVVFTVLVLLPLPLIIRSKEAECAYILFVIATFWITEALPLSITALLPGLMFPMFGIMSSTHVASAYFKDFHLLLIGVICLATSIEKWNLHKRIALRMVMMVGVNPAWLTLGFMSSTAFLSMWLSNTSTAAMVMPIVEAVAQQITSAEAEAEATQMTYFNESAAQGLEVDETIIGQETNERKEKTKPALGSSNDKGKVSSKMETEKNTVTGAKYRSKKDHMMCKLMCLCIAYSSTIGGLTTITGTSTNLIFSEHFNTRYPDCRCLNFGSWFLFSFPVAVILLLLSWIWLQWLFLGFNFKEMFKCGKTKTLKEKACAEVIKQEYEKLGPMRYQEIVTLVIFIVMALLWFSRDPGFVTGWSVLFSEYPGYVTDSTVALVAGILFFLIPAKKLTKMTSTGDIIAFDYSPLITWKEFQSFMPWDIAILVGGGFALADGCQVSGLSSWIGSKLSPLGSLPVWLIILISSLIVTSLTEVASNPATITILFPILSPLAEAIHVNPLHILLPSTLCTSFAFLLPVANPPNAIVFSYGHLKVIDMVKAGLGVNILGVAVVMLGMFTWIEPMFNLHEYPSWAPDIVNQTMP.

Transmembrane regions (helical) follow at residues 13–33, 40–60, 77–97, 113–133, and 134–154; these read FLLV…IRSK, ILFV…ITAL, VASA…CLAT, VMMV…STAF, and LSMW…VEAV. Asn174 carries an N-linked (GlcNAc...) asparagine glycan. The tract at residues 190-218 is disordered; sequence QETNERKEKTKPALGSSNDKGKVSSKMET. The segment covering 208 to 218 has biased composition (basic and acidic residues); the sequence is DKGKVSSKMET. Helical transmembrane passes span 239 to 259, 283 to 303, 348 to 368, 381 to 401, 464 to 484, 491 to 511, 512 to 532, and 553 to 573; these read LMCL…ITGT, SWFL…WIWL, IVTL…DPGF, GYVT…LIPA, PLGS…VTSL, PATI…IHVN, PLHI…LPVA, and AGLG…FTWI. Asn591 is a glycosylation site (N-linked (GlcNAc...) asparagine).

This sequence belongs to the SLC13A/DASS transporter (TC 2.A.47) family. NADC subfamily. As to expression, kidney and intestine.

It is found in the apical cell membrane. It catalyses the reaction sulfate(out) + 3 Na(+)(out) = sulfate(in) + 3 Na(+)(in). The enzyme catalyses selenate(out) + 3 Na(+)(out) = selenate(in) + 3 Na(+)(in). The catalysed reaction is thiosulfate(out) + 3 Na(+)(out) = thiosulfate(in) + 3 Na(+)(in). In terms of biological role, sodium:sulfate symporter that mediates sulfate reabsorption in the kidney and small intestine. Can also mediate the transport of selenate and thiosulfate. This Rattus norvegicus (Rat) protein is Solute carrier family 13 member 1 (Slc13a1).